Consider the following 63-residue polypeptide: Large ribosomal subunit protein uL29 (63 aa).

This sequence belongs to the universal ribosomal protein uL29 family.

The protein is Large ribosomal subunit protein uL29 of Alteromonas mediterranea (strain DSM 17117 / CIP 110805 / LMG 28347 / Deep ecotype).